Here is a 375-residue protein sequence, read N- to C-terminus: AT-rich binding protein (375 aa).

The segment at 29 to 52 adopts a C2H2-type 1 zinc-finger fold; it reads IVCHTCQEELQTQDQFWKHIQDEH. Over residues 110–119 the composition is skewed to basic and acidic residues; it reads DDQREMDIHE. The disordered stretch occupies residues 110–142; that stretch reads DDQREMDIHEAQQQQHQQQQQHQQQQQLQQQQQ. The segment covering 121 to 142 has biased composition (low complexity); sequence QQQQHQQQQQHQQQQQLQQQQQ. C2H2-type zinc fingers lie at residues 308–332 and 338–361; these read YICD…RVVH and FNCE…KKKH.

The protein resides in the nucleus. Functionally, may be a transcription factor for genes having (A+T) stretches in their promoter and/or enhancer regions. Binds to AT rich DNA. The protein is AT-rich binding protein of Drosophila pseudoobscura pseudoobscura (Fruit fly).